A 209-amino-acid chain; its full sequence is uncharacterized protein (209 aa).

It localises to the plastid. Its subcellular location is the chloroplast. This is an uncharacterized protein from Porphyra purpurea (Red seaweed).